The sequence spans 218 residues: Sodium channel regulatory subunit beta-1 (218 aa).

Positions 1 to 18 are cleaved as a signal peptide; the sequence is MGRLLALVVGAALVSSAC. Over 19–157 the chain is Extracellular; that stretch reads GGCVEVDSET…DKANRDMASI (139 aa). 2 cysteine pairs are disulfide-bonded: C21/C43 and C40/C121. The 129-residue stretch at 22 to 150 folds into the Ig-like C2-type domain; sequence VEVDSETEAV…KIHIEVVDKA (129 aa). Residues N93, N110, N114, and N135 are each glycosylated (N-linked (GlcNAc...) asparagine). A helical membrane pass occupies residues 158–179; that stretch reads VSEIMMYVLIVVLTIWLVAEMI. Topologically, residues 180 to 218 are cytoplasmic; it reads YCYKKIAAATETAAQENASEYLAITSESKENCTGVQVAE.

This sequence belongs to the sodium channel auxiliary subunit SCN1B (TC 8.A.17) family. In terms of assembly, voltage-gated sodium (Nav) channel consists of an ion-conducting pore-forming alpha subunit functional on its own that is regulated by one or more beta subunits. Interacts with SCN1A; regulatory subunit of SCN1A/Nav1.1. Interacts with SCN3A; regulatory subunit of SCN3A/Nav1.3. Interacts with SCN4A; regulatory subunit of SCN4A/Nav1.4. Interacts with SCN5A; regulatory subunit of SCN5A/Nav1.5. Interacts with SCN8A; regulatory subunit of SCN8A/Nav1.6. Interacts with SCN9A; regulatory subunit of SCN9A/Nav1.7. Interacts with SCN10A; regulatory subunit of SCN10A/Nav1.8. Interacts with NFASC. Interacts with TMEM65. As to expression, the overall expression of isoform 1 and isoform 2 is very similar. Isoform 1 is abundantly expressed in skeletal muscle, heart and brain. Isoform 2 is highly expressed in brain and skeletal muscle and present at a very low level in heart, placenta, lung, liver, kidney and pancreas. In brain, isoform 2 is most abundant in the cerebellum, followed by the cerebral cortex and occipital lobe, while isoform 1 levels are higher in the cortex compared to the cerebellum. Isoform 2 is expressed in many regions of the brain, including cerebellar Purkinje cells, cortex pyramidal neurons and many of the neuronal fibers throughout the brain (at protein level). Also detected in dorsal root ganglion, in fibers of the spinal nerve and in cortical neurons and their processes (at protein level).

It is found in the cell membrane. The protein localises to the perikaryon. The protein resides in the cell projection. It localises to the axon. Its subcellular location is the secreted. Regulatory subunit of multiple voltage-gated sodium (Nav) channels directly mediating the depolarization of excitable membranes. Navs, also called VGSCs (voltage-gated sodium channels) or VDSCs (voltage-dependent sodium channels), operate by switching between closed and open conformations depending on the voltage difference across the membrane. In the open conformation they allow Na(+) ions to selectively pass through the pore, along their electrochemical gradient. The influx of Na+ ions provokes membrane depolarization, initiating the propagation of electrical signals throughout cells and tissues. The accessory beta subunits participate in localization and functional modulation of the Nav channels. Modulates the activity of SCN1A/Nav1.1, SCN2A/Nav1.2, SCN3A/Nav1.3, SCN4A/Nav1.4, SCN5A/Nav1.5, SCN8A/Nav1.6, SCN9A/Nav1.7 and SCN10A/Nav1.8. Functionally, cell adhesion molecule that plays a critical role in neuronal migration and pathfinding during brain development. Stimulates neurite outgrowth. Has no regulatory function on the SCN2A sodium channel complex. This chain is Sodium channel regulatory subunit beta-1, found in Homo sapiens (Human).